A 254-amino-acid chain; its full sequence is uncharacterized protein (254 aa).

8 helical membrane-spanning segments follow: residues 41–61 (VFVF…IKII), 64–84 (IFQA…EYFF), 91–111 (IYCG…LYIL), 125–145 (ILIG…FVLA), 146–166 (PAAL…LWSF), 172–192 (FILL…IQLL), 204–224 (MLLA…VLTP), and 232–252 (IIMS…LFLL).

It belongs to the TatC family.

Its subcellular location is the plastid. The protein localises to the chloroplast membrane. This is an uncharacterized protein from Porphyra purpurea (Red seaweed).